The following is a 544-amino-acid chain: Membrane protein insertase YidC (544 aa).

6 helical membrane-spanning segments follow: residues 13–33 (LSLFLIGLFMLINDIFSSWML), 321–341 (LWYLIQVPMQMVMQVFYDVIP), 343–363 (WGLSIIFLTIVVRILIFPLTF), 409–429 (LGGCFPIILQLPIFFALYSLV), 461–481 (LYFVSWTDIRILPFIMMFTQL), and 506–526 (MPIMFFFILYNMPSGLLIYWI).

This sequence belongs to the OXA1/ALB3/YidC family. Type 1 subfamily. In terms of assembly, interacts with the Sec translocase complex via SecD. Specifically interacts with transmembrane segments of nascent integral membrane proteins during membrane integration.

The protein localises to the cell inner membrane. In terms of biological role, required for the insertion and/or proper folding and/or complex formation of integral membrane proteins into the membrane. Involved in integration of membrane proteins that insert both dependently and independently of the Sec translocase complex, as well as at least some lipoproteins. Aids folding of multispanning membrane proteins. This is Membrane protein insertase YidC from Borreliella afzelii (strain PKo) (Borrelia afzelii).